The primary structure comprises 597 residues: Arginine--tRNA ligase (597 aa).

Positions 138 to 148 (ANPTGPMHVGH) match the 'HIGH' region motif.

This sequence belongs to the class-I aminoacyl-tRNA synthetase family. In terms of assembly, monomer.

It is found in the cytoplasm. It catalyses the reaction tRNA(Arg) + L-arginine + ATP = L-arginyl-tRNA(Arg) + AMP + diphosphate. This chain is Arginine--tRNA ligase, found in Nitrobacter hamburgensis (strain DSM 10229 / NCIMB 13809 / X14).